The chain runs to 114 residues: Procyclic form-specific polypeptide A-alpha (114 aa).

A signal peptide spans 1–27 (MAPRSLYLLAILLFSANLFAGVGFAAA). A disordered region spans residues 33–95 (SNVIVKGGKG…EPEPEPGAAT (63 aa)). A compositionally biased stretch (acidic residues) spans 47 to 89 (DGPEEPEETGPEETGPEETGPEETGPEETGPEETGPEETEPEP). 7 consecutive repeat copies span residues 48–52 (GPEEP), 56–60 (GPEET), 61–65 (GPEET), 66–70 (GPEET), 71–75 (GPEET), 76–80 (GPEET), and 81–85 (GPEET). The segment at 48 to 85 (GPEEPEETGPEETGPEETGPEETGPEETGPEETGPEET) is 7 X 5 AA tandem repeats of G-P-E-E-[PT]. A lipid anchor (GPI-anchor amidated glycine) is attached at Gly-92. Residues 93–114 (AATLKSVALPFAVAAAALVAAF) constitute a propeptide that is removed on maturation.

It localises to the cell membrane. In terms of biological role, major surface antigen of procyclic forms. The chain is Procyclic form-specific polypeptide A-alpha (PARPA-ALPHA) from Trypanosoma brucei brucei.